The following is a 136-amino-acid chain: Large ribosomal subunit protein uL16 (136 aa).

This sequence belongs to the universal ribosomal protein uL16 family. In terms of assembly, part of the 50S ribosomal subunit.

In terms of biological role, binds 23S rRNA and is also seen to make contacts with the A and possibly P site tRNAs. The protein is Large ribosomal subunit protein uL16 of Pectobacterium atrosepticum (strain SCRI 1043 / ATCC BAA-672) (Erwinia carotovora subsp. atroseptica).